A 381-amino-acid chain; its full sequence is Neuropeptide Y receptor type 2 (381 aa).

Positions 1–37 are disordered; that stretch reads MGPVGAEADENQTVEVKVEPYGPGHTTPRGELPPDPE. The Extracellular portion of the chain corresponds to 1–51; it reads MGPVGAEADENQTVEVKVEPYGPGHTTPRGELPPDPEPELIDSTKLVEVQV. N-linked (GlcNAc...) asparagine glycosylation occurs at Asn-11. Residues 52–72 traverse the membrane as a helical segment; that stretch reads ILILAYCSIILLGVVGNSLVI. The Cytoplasmic portion of the chain corresponds to 73 to 86; sequence HVVIKFKSMRTVTN. The chain crosses the membrane as a helical span at residues 87–107; that stretch reads FFIANLAVADLLVNTLCLPFT. Residues 108 to 124 lie on the Extracellular side of the membrane; sequence LTYTLMGEWKMGPVLCH. A disulfide bond links Cys-123 and Cys-203. The chain crosses the membrane as a helical span at residues 125–145; that stretch reads LVPYAQGLAVQVSTITLTVIA. Topologically, residues 146–165 are cytoplasmic; it reads LDRHRCIVYHLESKISKRIS. Residues 166 to 186 form a helical membrane-spanning segment; the sequence is FLIIGLAWGISALLASPLAIF. Residues 187–216 are Extracellular-facing; it reads REYSLIEIIPDFEIVACTEKWPGEEKSVYG. Residues 217–237 traverse the membrane as a helical segment; it reads TVYSLSTLLILYVLPLGIISF. The Cytoplasmic portion of the chain corresponds to 238–268; sequence SYTRIWSKLRNHVSPGAASDHYHQRRHKMTK. Residues 269-289 traverse the membrane as a helical segment; that stretch reads MLVCVVVVFAVSWLPLHAFQL. At 290–304 the chain is on the extracellular side; that stretch reads AVDIDSHVLDLKEYK. Residues 305–325 traverse the membrane as a helical segment; it reads LIFTVFHIIAMCSTFANPLLY. Residues 326–381 lie on the Cytoplasmic side of the membrane; sequence GWMNSNYRKAFLSAFRCEQRLDAIHSEVSMTFKAKKNLEVKKNNGPTDSFSEATNV. Cys-342 is lipidated: S-palmitoyl cysteine.

Belongs to the G-protein coupled receptor 1 family.

It localises to the cell membrane. Functionally, receptor for neuropeptide Y and peptide YY. The chain is Neuropeptide Y receptor type 2 (Npy2r) from Mus musculus (Mouse).